We begin with the raw amino-acid sequence, 545 residues long: Chaperonin GroEL 2 (545 aa).

ATP is bound by residues 30 to 33, Lys-51, 87 to 91, Gly-415, 479 to 481, and Asp-495; these read TLGP, DGTTT, and NAA.

It belongs to the chaperonin (HSP60) family. In terms of assembly, forms a cylinder of 14 subunits composed of two heptameric rings stacked back-to-back. Interacts with the co-chaperonin GroES.

It is found in the cytoplasm. It carries out the reaction ATP + H2O + a folded polypeptide = ADP + phosphate + an unfolded polypeptide.. In terms of biological role, together with its co-chaperonin GroES, plays an essential role in assisting protein folding. The GroEL-GroES system forms a nano-cage that allows encapsulation of the non-native substrate proteins and provides a physical environment optimized to promote and accelerate protein folding. The polypeptide is Chaperonin GroEL 2 (Escherichia coli O1:K1 / APEC).